A 278-amino-acid chain; its full sequence is Neuronal membrane glycoprotein M6-a (278 aa).

M1 is modified (N-acetylmethionine). The Cytoplasmic portion of the chain corresponds to 1–22 (MEENMEEGQTQKGCFECCIKCL). Residues 23–43 (GGIPYASLIATILLYAGVALF) traverse the membrane as a helical segment. At 44–84 (CGCGHEALSGTVNILQTYFEMARTAGDTLDVFTMIDIFKYV) the chain is on the extracellular side. Residues 85–105 (IYGIAAAFFVYGILLMVEGFF) form a helical membrane-spanning segment. Topologically, residues 106-127 (TTGAIKDLYGDFKITTCGRCVS) are cytoplasmic. The helical transmembrane segment at 128–148 (AWFIMLTYLFMLAWLGVTAFT) threads the bilayer. The Extracellular segment spans residues 149-213 (SLPVYMYFNV…STELNMTFHL (65 aa)). The N-linked (GlcNAc...) asparagine glycan is linked to N164. C174 and C192 are joined by a disulfide. N-linked (GlcNAc...) asparagine glycosylation is present at N208. Residues 214–234 (FIVALAGAGAAVIAMVHYLMV) form a helical membrane-spanning segment. The Cytoplasmic portion of the chain corresponds to 235 to 278 (LSANWAYVKDACRMQKYEDIKSKEEQELHDIHSTRSKERLNAYT). Residue S256 is modified to Phosphoserine. T278 bears the Phosphothreonine mark.

This sequence belongs to the myelin proteolipid protein family. As to quaternary structure, interacts with OPRM1. Interacts with palmitoyltransferase ZDHHC17/HIP14; the interaction leads to palmitoylation of GPM6A. Post-translationally, N-glycosylated. In terms of processing, palmitoylated by ZDHHC17/HIP14. In terms of tissue distribution, expressed in hippocampus (at protein level). Isoform 1 is the predominant isoform expressed in brain, specifically in hippocampus. Isoform 2 is expressed at low levels in brain and kidney.

It is found in the cell membrane. The protein resides in the cell projection. It localises to the axon. The protein localises to the growth cone. Its subcellular location is the dendritic spine. It is found in the filopodium. The protein resides in the neuron projection. Its function is as follows. Involved in neuronal differentiation, including differentiation and migration of neuronal stem cells. Plays a role in neuronal plasticity and is involved in neurite and filopodia outgrowth, filopodia motility and probably synapse formation. Gpm6a-induced filopodia formation involves mitogen-activated protein kinase (MAPK) and Src signaling pathways. May be involved in neuronal NGF-dependent Ca(2+) influx. May be involved in regulation of endocytosis and intracellular trafficking of G-protein-coupled receptors (GPCRs); enhances internalization and recycling of mu-type opioid receptor. In Rattus norvegicus (Rat), this protein is Neuronal membrane glycoprotein M6-a (Gpm6a).